Reading from the N-terminus, the 292-residue chain is Ferric aerobactin-binding protein VatD (292 aa).

Residues 1–12 form the signal peptide; the sequence is MLSAALAFNSYA. A Fe/B12 periplasmic-binding domain is found at 30–292; that stretch reads KVVALDWVLT…HITGRLTQPQ (263 aa). Desferrioxamine B-binding residues include W61, R77, Y118, R185, W213, F215, W269, and F271.

The protein belongs to the bacterial solute-binding protein 8 family. The complex is composed of two ATP-binding proteins (VatC), two transmembrane proteins (VatB) and a solute-binding protein (VatD).

It is found in the periplasm. Functionally, part of the ABC transporter complex VatCDB involved in the import of iron(3+)-complexed aerobactin, a citrate-hydroxamate siderophore produced by other bacteria. Binds the iron(3+)-aerobactin complex and transfers it to the membrane-bound permease. Functions in the import of iron(3+)-complexed vulnibactin, a catecholate siderophore synthesized by V.vulnificus, in the absence of FatB. This Vibrio vulnificus protein is Ferric aerobactin-binding protein VatD.